The chain runs to 990 residues: Leucine--tRNA ligase (990 aa).

Residues 74–85 (PYPSGKGLHVGH) carry the 'HIGH' region motif. A disordered region spans residues 573-602 (LPINLPDVPDYSPKTFDPEDAESDPEAPLS). The 'KMSKS' region motif lies at 763–767 (KMGKS). Residue K766 coordinates ATP.

The protein belongs to the class-I aminoacyl-tRNA synthetase family.

It localises to the cytoplasm. The catalysed reaction is tRNA(Leu) + L-leucine + ATP = L-leucyl-tRNA(Leu) + AMP + diphosphate. This Bifidobacterium adolescentis (strain ATCC 15703 / DSM 20083 / NCTC 11814 / E194a) protein is Leucine--tRNA ligase.